A 329-amino-acid polypeptide reads, in one-letter code: Phosphate acetyltransferase (329 aa).

This sequence belongs to the phosphate acetyltransferase and butyryltransferase family.

The protein resides in the cytoplasm. It carries out the reaction acetyl-CoA + phosphate = acetyl phosphate + CoA. Its pathway is metabolic intermediate biosynthesis; acetyl-CoA biosynthesis; acetyl-CoA from acetate: step 2/2. This is Phosphate acetyltransferase (pta) from Corynebacterium glutamicum (strain ATCC 13032 / DSM 20300 / JCM 1318 / BCRC 11384 / CCUG 27702 / LMG 3730 / NBRC 12168 / NCIMB 10025 / NRRL B-2784 / 534).